The chain runs to 989 residues: DNA-binding protein SMUBP-2 (989 aa).

Ala-2 is modified (N-acetylalanine). ATP contacts are provided by residues 213-220, Gln-402, Tyr-441, and Glu-570; that span reads GPPGTGKT. The interval 637–783 is SS DNA-binding; the sequence is TAFEYLDDIV…KARHITVSRK (147 aa). Disordered regions lie at residues 650–717, 765–818, and 833–869; these read YTHE…GCDR, LRHD…GQPH, and LQRQ…TKGP. Residues 677 to 690 are compositionally biased toward low complexity; sequence EQENGQEARAAAGQ. An R3H domain is found at 721–784; the sequence is IDRTEHFRAM…ARHITVSRKS (64 aa). Over residues 765–775 the composition is skewed to basic and acidic residues; the sequence is LRHDSTGEGKA. Phosphoserine is present on residues Ser-797 and Ser-800. The span at 833-842 shows a compositional bias: low complexity; the sequence is LQRQQGSQAQ. The short motif at 860 to 864 is the Nuclear localization signal element; that stretch reads KKKKK. An AN1-type zinc finger spans residues 885 to 934; that stretch reads IKADNTCSFAKCTASTTTLGQFCMHCSRRYCLSHHLPEIHGCGEKARAHA. Residues Cys-891, Cys-896, Cys-907, Cys-910, Cys-915, His-918, His-924, and Cys-926 each contribute to the Zn(2+) site. Residues 954–972 show a composition bias toward basic and acidic residues; that stretch reads ALDPAKRAQLQRRLDKKLG. The tract at residues 954–989 is disordered; the sequence is ALDPAKRAQLQRRLDKKLGELSSQRTSKRKEKERGT.

Belongs to the DNA2/NAM7 helicase family. In terms of assembly, homooligomer. Interacts with RUVBL1. Interacts with RUVBL2. Interacts with GTF3C1. Interacts with ABT1. Interacts with ribosomes. High expression in brain and testis, moderate in heart, spleen, and kidney, and low in other tissues.

The protein resides in the nucleus. Its subcellular location is the cytoplasm. It localises to the cell projection. It is found in the axon. The catalysed reaction is ATP + H2O = ADP + phosphate + H(+). In terms of biological role, 5' to 3' helicase that unwinds RNA and DNA duplexes in an ATP-dependent reaction. Specific to 5'-phosphorylated single-stranded guanine-rich sequences. May play a role in RNA metabolism, ribosome biogenesis or initiation of translation. May play a role in regulation of transcription. Interacts with tRNA-Tyr. The polypeptide is DNA-binding protein SMUBP-2 (IGHMBP2) (Mesocricetus auratus (Golden hamster)).